A 483-amino-acid chain; its full sequence is Glutamyl-tRNA(Gln) amidotransferase subunit A (483 aa).

Catalysis depends on charge relay system residues Lys-75 and Ser-150. Ser-174 acts as the Acyl-ester intermediate in catalysis.

It belongs to the amidase family. GatA subfamily. As to quaternary structure, heterotrimer of A, B and C subunits.

It catalyses the reaction L-glutamyl-tRNA(Gln) + L-glutamine + ATP + H2O = L-glutaminyl-tRNA(Gln) + L-glutamate + ADP + phosphate + H(+). Functionally, allows the formation of correctly charged Gln-tRNA(Gln) through the transamidation of misacylated Glu-tRNA(Gln) in organisms which lack glutaminyl-tRNA synthetase. The reaction takes place in the presence of glutamine and ATP through an activated gamma-phospho-Glu-tRNA(Gln). This is Glutamyl-tRNA(Gln) amidotransferase subunit A from Legionella pneumophila subsp. pneumophila (strain Philadelphia 1 / ATCC 33152 / DSM 7513).